Reading from the N-terminus, the 611-residue chain is Oligoendopeptidase F homolog (611 aa).

Histidine 384 is a Zn(2+) binding site. Residue glutamate 385 is part of the active site. Histidine 388 and histidine 391 together coordinate Zn(2+).

Belongs to the peptidase M3B family. The cofactor is Zn(2+).

The sequence is that of Oligoendopeptidase F homolog (pepF) from Mycoplasma pneumoniae (strain ATCC 29342 / M129 / Subtype 1) (Mycoplasmoides pneumoniae).